The primary structure comprises 242 residues: ATP synthase subunit a (242 aa).

5 helical membrane passes run 28–48, 89–109, 128–148, 193–213, and 214–234; these read LHGQ…LLVV, LPFV…GALI, INTT…AGLS, LVVA…AMFL, and GLFT…NYIG.

It belongs to the ATPase A chain family. As to quaternary structure, F-type ATPases have 2 components, CF(1) - the catalytic core - and CF(0) - the membrane proton channel. CF(1) has five subunits: alpha(3), beta(3), gamma(1), delta(1), epsilon(1). CF(0) has four main subunits: a, b, b' and c.

The protein localises to the cellular thylakoid membrane. Functionally, key component of the proton channel; it plays a direct role in the translocation of protons across the membrane. This is ATP synthase subunit a from Synechococcus sp. (strain WH7803).